A 158-amino-acid chain; its full sequence is Inorganic pyrophosphatase (158 aa).

Residue glutamate 8 participates in Mg(2+) binding. Substrate contacts are provided by lysine 16, arginine 30, and tyrosine 42. The Mg(2+) site is built by aspartate 52, aspartate 57, aspartate 84, and aspartate 89. Aspartate 89 (proton acceptor) is an active-site residue. A substrate-binding site is contributed by tyrosine 125.

Belongs to the PPase family. Homohexamer. Mg(2+) is required as a cofactor.

The protein localises to the cytoplasm. It carries out the reaction diphosphate + H2O = 2 phosphate + H(+). Functionally, catalyzes the hydrolysis of inorganic pyrophosphate (PPi) forming two phosphate ions. This is Inorganic pyrophosphatase from Corynebacterium glutamicum (strain ATCC 13032 / DSM 20300 / JCM 1318 / BCRC 11384 / CCUG 27702 / LMG 3730 / NBRC 12168 / NCIMB 10025 / NRRL B-2784 / 534).